The chain runs to 312 residues: tRNA dimethylallyltransferase (312 aa).

10-17 serves as a coordination point for ATP; that stretch reads GPTASGKS. 12 to 17 lines the substrate pocket; the sequence is TASGKS. Residues 35–38 are interaction with substrate tRNA; that stretch reads DSKQ.

The protein belongs to the IPP transferase family. As to quaternary structure, monomer. It depends on Mg(2+) as a cofactor.

The catalysed reaction is adenosine(37) in tRNA + dimethylallyl diphosphate = N(6)-dimethylallyladenosine(37) in tRNA + diphosphate. Its function is as follows. Catalyzes the transfer of a dimethylallyl group onto the adenine at position 37 in tRNAs that read codons beginning with uridine, leading to the formation of N6-(dimethylallyl)adenosine (i(6)A). This Anaplasma phagocytophilum (strain HZ) protein is tRNA dimethylallyltransferase.